Reading from the N-terminus, the 1378-residue chain is Macrophage-stimulating protein receptor (1378 aa).

Residues 1–23 (MGLPLPLLQSSLLLMLLLRLSAA) form the signal peptide. Over 25–960 (TNLNWQCPRI…RSSPGRASQR (936 aa)) the chain is Extracellular. In terms of domain architecture, Sema spans 33 to 524 (RIPYAASRDF…SGDQVFKVPI (492 aa)). N-linked (GlcNAc...) asparagine glycosylation occurs at Asn-91. Cystine bridges form between Cys-102–Cys-105, Cys-108–Cys-163, Cys-136–Cys-144, Cys-175–Cys-178, Cys-301–Cys-368, Cys-386–Cys-409, and Cys-387–Cys-424. N-linked (GlcNAc...) asparagine glycosylation is found at Asn-391, Asn-460, and Asn-490. Intrachain disulfides connect Cys-529–Cys-547, Cys-535–Cys-569, Cys-538–Cys-554, and Cys-550–Cys-560. IPT/TIG domains lie at 571–673 (PEIS…FRVE), 686–769 (PVLT…FHYK), and 772–864 (PIVL…FRFL). Residues Asn-656, Asn-722, Asn-845, and Asn-901 are each glycosylated (N-linked (GlcNAc...) asparagine). The chain crosses the membrane as a helical span at residues 961–981 (ILLIALLVLILLVAVLAVALI). The Cytoplasmic portion of the chain corresponds to 982-1378 (FNSRRRKKQL…RPLSEPPLPT (397 aa)). Residues 1002–1026 (SDINDTASGAPNHEESSESRDGTSV) are disordered. Residues 1013–1022 (NHEESSESRD) show a composition bias toward basic and acidic residues. The Protein kinase domain occupies 1059–1322 (IHTDQVIGKG…ALVLEVKQVV (264 aa)). ATP-binding positions include 1065-1073 (IGKGHFGVV), Lys-1091, and 1138-1141 (LPYM). The active-site Proton acceptor is Asp-1185. Arg-1189 is a binding site for ATP. Residues Tyr-1215, Tyr-1216, Tyr-1330, and Tyr-1337 each carry the phosphotyrosine; by autocatalysis modification. The segment at 1347–1378 (DGSVPPEQVQPSPQHCRSTSKPRPLSEPPLPT) is disordered. Positions 1349–1360 (SVPPEQVQPSPQ) are enriched in low complexity.

The protein belongs to the protein kinase superfamily. Tyr protein kinase family. Heterodimer of an alpha chain and a beta chain which are disulfide linked. Binds PLXNB1. Associates with and is negatively regulated by HYAL2. Interacts when phosphorylated with downstream effectors including PIK3R1, PCLG1, GRB2 and GAB1. Interacts with integrin beta1/ITGB1 in a ligand-independent fashion. Isoform sf-Stk forms covalent heterodimers with friend spleen focus-forming virus (FSFFV) gp55. Proteolytic processing yields the two subunits. In terms of processing, autophosphorylated in response to ligand binding on Tyr-1215 and Tyr-1216 in the kinase domain leading to further phosphorylation of Tyr-1330 and Tyr-1337 in the C-terminal multifunctional docking site. Post-translationally, ubiquitinated. Ubiquitination by CBL regulates the receptor stability and activity through proteasomal degradation. O-mannosylation of IPT/TIG domains on Thr or Ser residues by TMEM260 is required for protein maturation. O-mannosylated residues are composed of single mannose glycans that are not elongated or modified. As to expression, expressed in liver, skin, lung, brain, testis and kidney.

Its subcellular location is the membrane. The catalysed reaction is L-tyrosyl-[protein] + ATP = O-phospho-L-tyrosyl-[protein] + ADP + H(+). Its activity is regulated as follows. In its inactive state, the C-terminal tail interacts with the catalytic domain and inhibits the kinase activity. Upon ligand binding, the C-terminal tail is displaced and becomes phosphorylated, thus increasing the kinase activity. Functionally, receptor tyrosine kinase that transduces signals from the extracellular matrix into the cytoplasm by binding to MST1 ligand. Regulates many physiological processes including cell survival, migration and differentiation. Ligand binding at the cell surface induces autophosphorylation of RON on its intracellular domain that provides docking sites for downstream signaling molecules. Following activation by ligand, interacts with the PI3-kinase subunit PIK3R1, PLCG1 or the adapter GAB1. Recruitment of these downstream effectors by RON leads to the activation of several signaling cascades including the RAS-ERK, PI3 kinase-AKT, or PLCgamma-PKC. RON signaling activates the wound healing response by promoting epithelial cell migration, proliferation as well as survival at the wound site. Also plays a role in the innate immune response by regulating the migration and phagocytic activity of macrophages. Alternatively, RON can also promote signals such as cell migration and proliferation in response to growth factors other than MST1 ligand. This chain is Macrophage-stimulating protein receptor (Mst1r), found in Mus musculus (Mouse).